Reading from the N-terminus, the 429-residue chain is Phosphoglucosamine mutase (429 aa).

The active-site Phosphoserine intermediate is Ser-96. Mg(2+) contacts are provided by Ser-96, Asp-230, Asp-232, and Asp-234. A Phosphoserine modification is found at Ser-96.

The protein belongs to the phosphohexose mutase family. Requires Mg(2+) as cofactor. Post-translationally, activated by phosphorylation.

The catalysed reaction is alpha-D-glucosamine 1-phosphate = D-glucosamine 6-phosphate. In terms of biological role, catalyzes the conversion of glucosamine-6-phosphate to glucosamine-1-phosphate. This chain is Phosphoglucosamine mutase, found in Thermotoga petrophila (strain ATCC BAA-488 / DSM 13995 / JCM 10881 / RKU-1).